A 98-amino-acid chain; its full sequence is NADH-ubiquinone oxidoreductase chain 4L (98 aa).

The next 3 helical transmembrane spans lie at 1–21 (MSMV…GLLM), 29–49 (SLLC…VTIL), and 61–81 (IILL…LVMV).

This sequence belongs to the complex I subunit 4L family. In terms of assembly, core subunit of respiratory chain NADH dehydrogenase (Complex I) which is composed of 45 different subunits.

Its subcellular location is the mitochondrion inner membrane. The enzyme catalyses a ubiquinone + NADH + 5 H(+)(in) = a ubiquinol + NAD(+) + 4 H(+)(out). In terms of biological role, core subunit of the mitochondrial membrane respiratory chain NADH dehydrogenase (Complex I) which catalyzes electron transfer from NADH through the respiratory chain, using ubiquinone as an electron acceptor. Part of the enzyme membrane arm which is embedded in the lipid bilayer and involved in proton translocation. This chain is NADH-ubiquinone oxidoreductase chain 4L (MT-ND4L), found in Erignathus barbatus (Bearded seal).